The chain runs to 240 residues: Cell division protein FtsQ (240 aa).

At 1–7 (MTGPGLR) the chain is on the cytoplasmic side. A helical membrane pass occupies residues 8–28 (LLAGMGLAGALVLGLSLWLHF). The Periplasmic portion of the chain corresponds to 29–240 (DPDQHLPIGS…EADNDGGNAR (212 aa)). Residues 34-102 (LPIGSIQITG…DTLEVHVTEP (69 aa)) enclose the POTRA domain.

This sequence belongs to the FtsQ/DivIB family. FtsQ subfamily. As to quaternary structure, part of a complex composed of FtsB, FtsL and FtsQ.

The protein localises to the cell inner membrane. Functionally, essential cell division protein. May link together the upstream cell division proteins, which are predominantly cytoplasmic, with the downstream cell division proteins, which are predominantly periplasmic. May control correct divisome assembly. This Thioalkalivibrio sp. (strain K90mix) protein is Cell division protein FtsQ.